The following is an 879-amino-acid chain: Alanine--tRNA ligase (879 aa).

Zn(2+) contacts are provided by His-570, His-574, Cys-672, and His-676.

Belongs to the class-II aminoacyl-tRNA synthetase family. It depends on Zn(2+) as a cofactor.

It localises to the cytoplasm. It carries out the reaction tRNA(Ala) + L-alanine + ATP = L-alanyl-tRNA(Ala) + AMP + diphosphate. Functionally, catalyzes the attachment of alanine to tRNA(Ala) in a two-step reaction: alanine is first activated by ATP to form Ala-AMP and then transferred to the acceptor end of tRNA(Ala). Also edits incorrectly charged Ser-tRNA(Ala) and Gly-tRNA(Ala) via its editing domain. The sequence is that of Alanine--tRNA ligase from Nitratidesulfovibrio vulgaris (strain ATCC 29579 / DSM 644 / CCUG 34227 / NCIMB 8303 / VKM B-1760 / Hildenborough) (Desulfovibrio vulgaris).